The sequence spans 2724 residues: Eukaryotic translation initiation factor 2-alpha kinase 2 (2724 aa).

Over 1 to 24 (MLNMVDQKKGINNGSSTGVINNIN) the chain is Cytoplasmic. The chain crosses the membrane as a helical span at residues 25-45 (GKIKNEFIFMYLIAAGGFSCV). The Extracellular segment spans residues 46–673 (YKIKKKKSNK…KFYIKRHNQK (628 aa)). Residues 112 to 153 (KRERRGRRKEQQREQMGDKRREKRQQQRREKRKEQNTNTKKR) form a disordered region. The segment covering 120–146 (KEQQREQMGDKRREKRQQQRREKRKEQ) has biased composition (basic and acidic residues). A helical membrane pass occupies residues 674 to 694 (TYFFENIIFYHYIIMLFLDIE). Over 695 to 718 (KYKNKFVSLFQYNLYRKLLKISKR) the chain is Cytoplasmic. Residues 719–739 (IVLMLHRIETNVICIFLLKHF) traverse the membrane as a helical segment. Residues 740-800 (EDYFIRKGIH…KKNIFNFFIE (61 aa)) lie on the Extracellular side of the membrane. A helical transmembrane segment spans residues 801 to 821 (LFLNNIQINIFKKFEILYLII). The Cytoplasmic segment spans residues 822–832 (YFYNYFEKSKQ). A helical membrane pass occupies residues 833-853 (FDIEGIGDIIYVWLSLINLFY). Topologically, residues 854–876 (DDKGKCIKILSKIFAKLNKKLYY) are extracellular. Residues 877–897 (VYWGKLYIIMNWTTIVDTIFI) form a helical membrane-spanning segment. At 898 to 908 (RNVLSINREGN) the chain is on the cytoplasmic side. Residues 909–929 (YYWVIIVLKMINYFVNVAYTL) form a helical membrane-spanning segment. Over 930–996 (TRMDIFFIKV…KKNYDIYTKY (67 aa)) the chain is Extracellular. A helical transmembrane segment spans residues 997–1017 (AILFIYCFIIQAYYFDTLFNI). The Cytoplasmic segment spans residues 1018–2724 (RSLESNEIAN…GDIFLPDKCP (1707 aa)). Lys2029 is a binding site for ATP. The Protein kinase domain maps to 2084–2719 (KHYFTKCGIL…KIISAGDIFL (636 aa)). A coiled-coil region spans residues 2120 to 2155 (INTLNEENQNMFCKNKEKKEENYKKIDTNISQFSEK). Catalysis depends on Asp2229, which acts as the Proton acceptor. Residues 2479-2507 (EKMDKNKIAAQKKKKKKENKHPIGRRSTN) form a disordered region. Residues 2488–2502 (AQKKKKKKENKHPIG) show a composition bias toward basic residues.

Belongs to the protein kinase superfamily. Ser/Thr protein kinase family. GCN2 subfamily. In terms of processing, auto-phosphorylated.

The protein resides in the membrane. It catalyses the reaction L-seryl-[protein] + ATP = O-phospho-L-seryl-[protein] + ADP + H(+). The enzyme catalyses L-threonyl-[protein] + ATP = O-phospho-L-threonyl-[protein] + ADP + H(+). Phosphorylates translation factor eIF2alpha in salivary gland sporozoites during dormancy, which leads to an inhibition of protein translation and accumulation of stalled mRNAs into granules. The chain is Eukaryotic translation initiation factor 2-alpha kinase 2 from Plasmodium berghei (strain Anka).